A 205-amino-acid polypeptide reads, in one-letter code: DNA-directed RNA polymerase RPB5 homolog (205 aa).

Belongs to the archaeal RpoH/eukaryotic RPB5 RNA polymerase subunit family. Part of the viral DNA-directed RNA polymerase that consists of 8 polII-like subunits (RPB1, RPB2, RPB3, RPB5, RPB6, RPB7, RPB9, RPB10), a capping enzyme and a termination factor.

Its subcellular location is the host cytoplasm. It is found in the virion. Functionally, component of the DNA-directed RNA polymerase (RNAP) that catalyzes the transcription in the cytoplasm of viral DNA into RNA using the four ribonucleoside triphosphates as substrates. In African swine fever virus (isolate Pig/Kenya/KEN-50/1950) (ASFV), this protein is DNA-directed RNA polymerase RPB5 homolog.